The following is a 616-amino-acid chain: FNIP repeat-containing protein DDB_G0290639 (616 aa).

Positions 239-274 (FENNNNNNNNNNNNNNNNNNNNNNNNNNNNNKKTEK) form a coiled coil. Residues 241–269 (NNNNNNNNNNNNNNNNNNNNNNNNNNNNN) show a composition bias toward low complexity. The tract at residues 241–270 (NNNNNNNNNNNNNNNNNNNNNNNNNNNNNK) is disordered. 6 FNIP repeats span residues 337–379 (FEES…FNDG), 380–421 (FNQS…KLCN), 423–464 (FSQP…VFYD), 466–508 (FNQL…FSDG), 509–550 (FNQT…LIDS), and 552–593 (FQQP…ILDK).

This Dictyostelium discoideum (Social amoeba) protein is FNIP repeat-containing protein DDB_G0290639.